The following is a 410-amino-acid chain: Beta-arrestin-2 (410 aa).

The residue at position 48 (Tyr-48) is a Phosphotyrosine. Hydroxyproline; by PHD2 occurs at positions 176 and 181. The interaction with TRAF6 stretch occupies residues 241–410 (ADICLFSTAQ…KDDDCDDQFC (170 aa)). The residue at position 361 (Ser-361) is a Phosphoserine. An interaction with AP2B1 region spans residues 378–410 (DTNYATDDDIVFEDFARLRLKGMKDDDCDDQFC). A Phosphothreonine; by CaMK2 modification is found at Thr-383. Residues 386-396 (DIVFEDFARLR) carry the [DE]-X(1,2)-F-X-X-[FL]-X-X-X-R motif motif.

Belongs to the arrestin family. As to quaternary structure, homooligomer; the self-association is mediated by InsP6-binding. Heterooligomer with ARRB1; the association is mediated by InsP6-binding. Interacts with ADRB2 and CHRM2. Interacts with PDE4A. Interacts with PDE4D. Interacts with MAPK10, MAPK1 and MAPK3. Interacts with DRD2. Interacts with FSHR. Interacts with CLTC. Interacts with HTR2C. Interacts with CCR5. Interacts with CXCR4. Interacts with SRC. Interacts with DUSP16; the interaction is interrupted by stimulation of AGTR1 and activation of MAPK10. Interacts with CHUK; the interaction is enhanced stimulation of ADRB2. Interacts with RELA. Interacts with MDM2; the interaction is enhanced by activation of GPCRs. Interacts with SLC9A5. Interacts with TRAF6. Interacts with IGF1R. Interacts with ENG. Interacts with KIR2DL1, KIR2DL3 and KIR2DL4. Interacts with LDLR. Interacts with AP2B1. Interacts with C5AR1. Interacts with RAF1. Interacts with MAP2K1. Interacts with MAPK1. Interacts with MAPK10; the interaction enhances MAPK10 activation by MAP3K5. Interacts with MAP2K4; the interaction is enhanced by presence of MAP3K5 and MAPK10. Interacts with MAP3K5. Interacts with AKT1. Interacts with IKBKB and MAP3K14. Interacts with SMO (activated). Interacts with GSK3A and GSK3B. Associates with protein phosphatase 2A (PP2A). Interacts with CXCR4; the interaction is dependent on C-terminal phosphorylation of CXCR4 and allows activation of MAPK1 and MAPK3. Interacts with GPR143. Interacts with HCK and CXCR1 (phosphorylated). Interacts with ACKR3 and ACKR4. Interacts with ARRDC1; the interaction is direct. Interacts with GPR61, GPR62 and GPR135. Interacts (via NACHT and LRR domains) with NLRP3; this interaction is direct and inducible by omega-3 polyunsaturated fatty acids (PUFAs). Interacts with FFAR4 (via C-terminus); this interaction is stimulated by long-chain fatty acids (LCFAs). Interacts with GPR35. Interacts with GPR84. Interacts with TIGIT; this interaction inhibits the NF-kappa-B pathway. Interacts with TGFBR3. In terms of processing, phosphorylated at Thr-383 in the cytoplasm; probably dephosphorylated at the plasma membrane. The phosphorylation does not regulate internalization and recycling of ADRB2, interaction with clathrin or AP2B1. The ubiquitination status appears to regulate the formation and trafficking of beta-arrestin-GPCR complexes and signaling. Ubiquitination appears to occur GPCR-specific. Ubiquitinated by MDM2; the ubiquitination is required for rapid internalization of ADRB2. Deubiquitinated by USP33; the deubiquitination leads to a dissociation of the beta-arrestin-GPCR complex. Stimulation of a class A GPCR, such as ADRB2, induces transient ubiquitination and subsequently promotes association with USP33. Stimulation of a class B GPCR promotes a sustained ubiquitination. Deubiquitinated by USP20; allowing USP20 to deubiquitinate TRAF6 leading to inhibition of NF-kappa-B signaling. Post-translationally, hydroxylation by PHD2 modulates the rate of internalization by slowing down recruitment to the plasma membrane and inhibiting subsequent co-internalization with class A receptors. Predominantly localized in neuronal tissues and in the spleen.

It localises to the cytoplasm. It is found in the nucleus. The protein resides in the cell membrane. Its subcellular location is the membrane. The protein localises to the clathrin-coated pit. It localises to the cytoplasmic vesicle. Functionally, functions in regulating agonist-mediated G-protein coupled receptor (GPCR) signaling by mediating both receptor desensitization and resensitization processes. During homologous desensitization, beta-arrestins bind to the GPRK-phosphorylated receptor and sterically preclude its coupling to the cognate G-protein; the binding appears to require additional receptor determinants exposed only in the active receptor conformation. The beta-arrestins target many receptors for internalization by acting as endocytic adapters (CLASPs, clathrin-associated sorting proteins) and recruiting the GPRCs to the adapter protein 2 complex 2 (AP-2) in clathrin-coated pits (CCPs). However, the extent of beta-arrestin involvement appears to vary significantly depending on the receptor, agonist and cell type. Internalized arrestin-receptor complexes traffic to intracellular endosomes, where they remain uncoupled from G-proteins. Two different modes of arrestin-mediated internalization occur. Class A receptors, like ADRB2, OPRM1, ENDRA, D1AR and ADRA1B dissociate from beta-arrestin at or near the plasma membrane and undergo rapid recycling. Class B receptors, like AVPR2, AGTR1, NTSR1, TRHR and TACR1 internalize as a complex with arrestin and traffic with it to endosomal vesicles, presumably as desensitized receptors, for extended periods of time. Receptor resensitization then requires that receptor-bound arrestin is removed so that the receptor can be dephosphorylated and returned to the plasma membrane. Mediates endocytosis of CCR7 following ligation of CCL19 but not CCL21. Involved in internalization of P2RY1, P2RY4, P2RY6 and P2RY11 and ATP-stimulated internalization of P2RY2. Involved in phosphorylation-dependent internalization of OPRD1 and subsequent recycling or degradation. Involved in ubiquitination of IGF1R. Beta-arrestins function as multivalent adapter proteins that can switch the GPCR from a G-protein signaling mode that transmits short-lived signals from the plasma membrane via small molecule second messengers and ion channels to a beta-arrestin signaling mode that transmits a distinct set of signals that are initiated as the receptor internalizes and transits the intracellular compartment. Acts as a signaling scaffold for MAPK pathways such as MAPK1/3 (ERK1/2) and MAPK10 (JNK3). ERK1/2 and JNK3 activated by the beta-arrestin scaffold are largely excluded from the nucleus and confined to cytoplasmic locations such as endocytic vesicles, also called beta-arrestin signalosomes. Acts as a signaling scaffold for the AKT1 pathway. GPCRs for which the beta-arrestin-mediated signaling relies on both ARRB1 and ARRB2 (codependent regulation) include ADRB2, F2RL1 and PTH1R. For some GPCRs the beta-arrestin-mediated signaling relies on either ARRB1 or ARRB2 and is inhibited by the other respective beta-arrestin form (reciprocal regulation). Increases ERK1/2 signaling in AGTR1- and AVPR2-mediated activation (reciprocal regulation). Involved in CCR7-mediated ERK1/2 signaling involving ligand CCL19. Is involved in type-1A angiotensin II receptor/AGTR1-mediated ERK activity. Is involved in type-1A angiotensin II receptor/AGTR1-mediated MAPK10 activity. Is involved in dopamine-stimulated AKT1 activity in the striatum by disrupting the association of AKT1 with its negative regulator PP2A. Involved in AGTR1-mediated chemotaxis. Appears to function as signaling scaffold involved in regulation of MIP-1-beta-stimulated CCR5-dependent chemotaxis. Involved in attenuation of NF-kappa-B-dependent transcription in response to GPCR or cytokine stimulation by interacting with and stabilizing CHUK. Suppresses UV-induced NF-kappa-B-dependent activation by interacting with CHUK. The function is promoted by stimulation of ADRB2 and dephosphorylation of ARRB2. Involved in IL8-mediated granule release in neutrophils. Involved in p53/TP53-mediated apoptosis by regulating MDM2 and reducing the MDM2-mediated degradation of p53/TP53. May serve as nuclear messenger for GPCRs. Upon stimulation of OR1D2, may be involved in regulation of gene expression during the early processes of fertilization. Also involved in regulation of receptors other than GPCRs. Involved in endocytosis of TGFBR2 and TGFBR3 and down-regulates TGF-beta signaling such as NF-kappa-B activation. Involved in endocytosis of low-density lipoprotein receptor/LDLR. Involved in endocytosis of smoothened homolog/Smo, which also requires GRK2. Involved in endocytosis of SLC9A5. Involved in endocytosis of ENG and subsequent TGF-beta-mediated ERK activation and migration of epithelial cells. Involved in Toll-like receptor and IL-1 receptor signaling through the interaction with TRAF6 which prevents TRAF6 autoubiquitination and oligomerization required for activation of NF-kappa-B and JUN. Involved in insulin resistance by acting as insulin-induced signaling scaffold for SRC, AKT1 and INSR. Involved in regulation of inhibitory signaling of natural killer cells by recruiting PTPN6 and PTPN11 to KIR2DL1. Involved in the internalization of the atypical chemokine receptor ACKR3. Acts as an adapter protein coupling FFAR4 receptor to specific downstream signaling pathways, as well as mediating receptor endocytosis. During the activation step of NLRP3 inflammasome, directly associates with NLRP3 leading to inhibition of pro-inflammatory cytokine release and inhibition of inflammation. The protein is Beta-arrestin-2 (Arrb2) of Rattus norvegicus (Rat).